Consider the following 1470-residue polypeptide: RNA-directed RNA polymerase VP1 (1470 aa).

The segment at 28-55 is disordered; that stretch reads AKQDQKENETTSNNKDTSSSVPKPSNFR. Over residues 37-50 the composition is skewed to polar residues; sequence TTSNNKDTSSSVPK.

It carries out the reaction RNA(n) + a ribonucleoside 5'-triphosphate = RNA(n+1) + diphosphate. Its function is as follows. RNA-directed RNA polymerase that is involved in transcription and genome replication. Following infection, it catalyzes the synthesis of fully conservative plus strands. After core assembly, which consists in recruitment of one capped plus-strand for each genomic segments and polymerase complexes, the polymerase switches mode and catalyzes the synthesis of complementary minus-strands. This is RNA-directed RNA polymerase VP1 (S1) from Saccharum officinarum (Sugarcane).